We begin with the raw amino-acid sequence, 950 residues long: Protocadherin alpha-9 (950 aa).

The signal sequence occupies residues 1–29 (MLYSSRGDPEGQPLLLSLLILAMWVVGSG). Cadherin domains are found at residues 30–133 (QLHY…PPVF), 134–242 (PATQ…APVF), 243–350 (DRTL…APQL), 351–455 (TIKT…APAF), 456–565 (AQPE…APAL), and 588–678 (GVVV…APKS). Over 30–697 (QLHYSVPEEA…GPEVTLVDVN (668 aa)) the chain is Extracellular. 2 N-linked (GlcNAc...) asparagine glycosylation sites follow: Asn254 and Asn265. Asn548 carries an N-linked (GlcNAc...) asparagine glycan. The chain crosses the membrane as a helical span at residues 698–718 (VYLIIAICAVSSLLVLTLLLY). The Cytoplasmic segment spans residues 719-950 (TVLRCSAMPT…GNSTTDNSDQ (232 aa)). One copy of the PXXP 1 repeat lies at 734–737 (PGKP). The segment at 734 to 894 (PGKPTLVCSS…PDKFIIPGSP (161 aa)) is 5 X 4 AA repeats of P-X-X-P. 2 disordered regions span residues 759–808 (CSGE…DWRY) and 827–950 (ILRA…NSDQ). The span at 789–798 (PSASSDSSGK) shows a compositional bias: polar residues. PXXP repeat units lie at residues 799-802 (PRQP), 832-835 (PGGP), 873-876 (PGNP), and 891-894 (PGSP). Residues 909–923 (DKSDFITFGKKEETK) show a composition bias toward basic and acidic residues.

It localises to the cell membrane. In terms of biological role, potential calcium-dependent cell-adhesion protein. May be involved in the establishment and maintenance of specific neuronal connections in the brain. This chain is Protocadherin alpha-9 (PCDHA9), found in Pan troglodytes (Chimpanzee).